A 65-amino-acid polypeptide reads, in one-letter code: Small ribosomal subunit protein bS21 (65 aa).

It belongs to the bacterial ribosomal protein bS21 family.

The chain is Small ribosomal subunit protein bS21 from Chlorobaculum parvum (strain DSM 263 / NCIMB 8327) (Chlorobium vibrioforme subsp. thiosulfatophilum).